The sequence spans 190 residues: MRNMHTNRRSPGPITSAATQRRLKPEPEPTVKKFIKIILLSRIIEKMMKVPARFVRFGPKLTDNVTLQTPVGFKRSIRIKRIGDEVWFEKGWSEFAEAHSLSDGHFLFFHYEGDSCFRVVIFDVSASEIEYPLDDTDDNREEVMDDDEQGFTGFESSDDDGEVVDMDELLKKKKKKPRVNIKSENVIILD.

The tract at residues 1–27 (MRNMHTNRRSPGPITSAATQRRLKPEP) is disordered. The segment at residues 33–125 (KFIKIILLSR…CFRVVIFDVS (93 aa)) is a DNA-binding region (TF-B3).

The protein localises to the nucleus. This Arabidopsis thaliana (Mouse-ear cress) protein is B3 domain-containing protein At1g49475.